We begin with the raw amino-acid sequence, 345 residues long: Adenosine kinase 2 (345 aa).

Asp-300 is a catalytic residue.

Belongs to the carbohydrate kinase PfkB family. Interacts with the begomovirus AL2 protein and the curtovirus L2 protein. Interacts with KIN11. It depends on Mg(2+) as a cofactor. Post-translationally, phosphorylated by KIN11. In terms of tissue distribution, widely expressed.

It is found in the cytoplasm. The catalysed reaction is adenosine + ATP = AMP + ADP + H(+). Its pathway is purine metabolism; AMP biosynthesis via salvage pathway; AMP from adenosine: step 1/1. With respect to regulation, inactivated by the begomovirus AL2 protein or the curtovirus L2 protein. In terms of biological role, ATP dependent phosphorylation of adenosine and other related nucleoside analogs to monophosphate derivatives. Essential to sustain methyl recycling. This is Adenosine kinase 2 from Arabidopsis thaliana (Mouse-ear cress).